The chain runs to 476 residues: Proline--tRNA ligase (476 aa).

It belongs to the class-II aminoacyl-tRNA synthetase family. ProS type 3 subfamily. Homodimer.

It is found in the cytoplasm. The catalysed reaction is tRNA(Pro) + L-proline + ATP = L-prolyl-tRNA(Pro) + AMP + diphosphate. Its function is as follows. Catalyzes the attachment of proline to tRNA(Pro) in a two-step reaction: proline is first activated by ATP to form Pro-AMP and then transferred to the acceptor end of tRNA(Pro). In Mycoplasma mobile (strain ATCC 43663 / 163K / NCTC 11711) (Mesomycoplasma mobile), this protein is Proline--tRNA ligase.